A 464-amino-acid chain; its full sequence is L-cysteine:1D-myo-inositol 2-amino-2-deoxy-alpha-D-glucopyranoside ligase (464 aa).

Residue cysteine 67 participates in Zn(2+) binding. L-cysteinyl-5'-AMP is bound by residues 67-70 (CGIT), threonine 82, and 105-107 (NVT). Residues 69-79 (ITPYDATHLGH) carry the 'HIGH' region motif. The short motif at 207 to 212 (ERGGDP) is the 'ERGGDP' region element. Tryptophan 247 contributes to the L-cysteinyl-5'-AMP binding site. Cysteine 251 is a binding site for Zn(2+). 269 to 271 (GTD) provides a ligand contact to L-cysteinyl-5'-AMP. A Zn(2+)-binding site is contributed by histidine 276. Valine 303 is an L-cysteinyl-5'-AMP binding site. A 'KMSKS' region motif is present at residues 309 to 313 (KMSKS). The segment at 410–435 (AGGSAGAGPDPTHQGGPVRGSGGDVP) is disordered.

This sequence belongs to the class-I aminoacyl-tRNA synthetase family. MshC subfamily. Monomer. Zn(2+) is required as a cofactor.

It carries out the reaction 1D-myo-inositol 2-amino-2-deoxy-alpha-D-glucopyranoside + L-cysteine + ATP = 1D-myo-inositol 2-(L-cysteinylamino)-2-deoxy-alpha-D-glucopyranoside + AMP + diphosphate + H(+). Its function is as follows. Catalyzes the ATP-dependent condensation of GlcN-Ins and L-cysteine to form L-Cys-GlcN-Ins. The chain is L-cysteine:1D-myo-inositol 2-amino-2-deoxy-alpha-D-glucopyranoside ligase from Frankia casuarinae (strain DSM 45818 / CECT 9043 / HFP020203 / CcI3).